A 762-amino-acid chain; its full sequence is MREKDLIKLEFDKVKEVLASYAHSPATKEKIQNLKPYTNKEKVKEEIELSKAFFDIAENVRLFEFEDIRELLKKAKLQGAILGVEDILKILNVINLTKEIRRVLSSHVQRLEPLRKVYKKLYTFSPLENLIIGSIDPRGFVKDEASEELLRVRKSIRAVEEEIKKRLDNLINRPDSAKFLSDRIVTIRNGRYVIPVKTSHVKKIFGIVHGTSSSGYTTYVEPQFVIHLNNKLTELKQKEEEEVRKVLQRITEYIGDYAKELLESFEACVEVDFQQCKYRFSKLVEGSFPDFGEWVELYEARHPVLVLVKEDVVPVGILLKEKKGLILTGPNTGGKTVALKTLGLSVLMFQSAIPVPASPNSKLPLFEKVFTDIGDEQSIEQNLSTFSAHVKNMAEFLPKSDENTLVLIDELGAGTDPIEGSALGIGILEYLKKKKAWVFVTTHHTPIKLYSTNSDYYTPASVLFDRETLKPLYKIAYNTVGESMAFYIAQKYGIPSEVIEIAKRHVGEFGEQYIKAMEKLSDYVKKYEEEFRKLEELRKELQKEKEEVEKLRKEYEEAKRKGWKEAYKEAREYLRKLVQESEEIFKKAKEKKEIKEFVSKKREEIENLAPQKPQKLEVGDLVEFMGKKGKVLEVKGNKALVLVDHLRMWLDTRELQKVGKAEPQKETKVTVQTPVMEKRDTLNLIGKDVETAVRELEKFIEEAYSAGYKVVKVIHGIGSGKLKSAVREALSKNEKVKFFRDAYPKEGGSGVTVVYLEYGEET.

329-336 is an ATP binding site; that stretch reads GPNTGGKT. The Smr domain occupies 682-757; sequence LNLIGKDVET…GSGVTVVYLE (76 aa).

The protein belongs to the DNA mismatch repair MutS family. MutS2 subfamily. As to quaternary structure, homodimer. Binds to stalled ribosomes, contacting rRNA.

Functionally, endonuclease that is involved in the suppression of homologous recombination and thus may have a key role in the control of bacterial genetic diversity. Its function is as follows. Acts as a ribosome collision sensor, splitting the ribosome into its 2 subunits. Detects stalled/collided 70S ribosomes which it binds and splits by an ATP-hydrolysis driven conformational change. Acts upstream of the ribosome quality control system (RQC), a ribosome-associated complex that mediates the extraction of incompletely synthesized nascent chains from stalled ribosomes and their subsequent degradation. Probably generates substrates for RQC. This Aquifex aeolicus (strain VF5) protein is Endonuclease MutS2.